We begin with the raw amino-acid sequence, 70 residues long: Envelope small membrane protein (70 aa).

Gly2 carries the N-myristoyl glycine; by host lipid modification. Positions 2 to 15 (GSLWSKISQLFVDA) are endoplasmic reticulum retention signal. The Virion surface portion of the chain corresponds to 2-25 (GSLWSKISQLFVDAFTEFLVSVVD). A helical transmembrane segment spans residues 26–46 (IVIFLAILFGFTVAGWLLVFL). Residues 47–70 (LRVVCSALLRSRSAIHSPELSKVL) lie on the Intravirion side of the membrane.

This sequence belongs to the arteriviridae E protein family. As to quaternary structure, homooligomer. Associates with itself into higher-order structures, including dimers, trimers and tetramers. Associates with the GP2b-GP3-GP4 complex. Myristoylated. In terms of processing, not glycosylated.

It localises to the virion membrane. The protein resides in the host endoplasmic reticulum membrane. The protein localises to the host Golgi apparatus membrane. It is found in the secreted. Functionally, minor envelope protein. May function as a viroporin in the virion envelope that facilitates uncoating of the virus in order to release the genomic RNA into the cytoplasm for subsequent replication. This chain is Envelope small membrane protein (GP2b), found in Sus scrofa (Pig).